The following is a 633-amino-acid chain: Acetylcholinesterase (633 aa).

Positions 1–23 are cleaved as a signal peptide; that stretch reads MKILDALLFPVIFIMFFIHLSIA. A disulfide bridge links C91 with C118. 2 N-linked (GlcNAc...) asparagine glycosylation sites follow: N133 and N184. The active-site Acyl-ester intermediate is the S225. Residues C279 and C290 are joined by a disulfide bond. Residue N283 is glycosylated (N-linked (GlcNAc...) asparagine). E352 serves as the catalytic Charge relay system. A glycan (N-linked (GlcNAc...) asparagine) is linked at N368. A disulfide bridge links C427 with C579. Catalysis depends on H494, which acts as the Charge relay system. N-linked (GlcNAc...) asparagine glycosylation is found at N511 and N591.

It belongs to the type-B carboxylesterase/lipase family.

It is found in the synapse. Its subcellular location is the secreted. It localises to the cell membrane. The enzyme catalyses acetylcholine + H2O = choline + acetate + H(+). Terminates signal transduction at the neuromuscular junction by rapid hydrolysis of the acetylcholine released into the synaptic cleft. The chain is Acetylcholinesterase (ache) from Electrophorus electricus (Electric eel).